We begin with the raw amino-acid sequence, 143 residues long: Turripeptide VIII-01 (143 aa).

A signal peptide spans 1-23; sequence MALSLDILMSVTMVTAVLTTVNA. Residues 24-32 constitute a propeptide that is removed on maturation; the sequence is EYKDSRLDS.

Contains 4 disulfide bonds. As to expression, expressed by the venom duct.

The protein resides in the secreted. The polypeptide is Turripeptide VIII-01 (Gemmula speciosa (Splendid gem-turris)).